The sequence spans 37 residues: Cytochrome b6-f complex subunit 5 (37 aa).

Residues 5–25 form a helical membrane-spanning segment; that stretch reads FLLGIILGLIPITLIGLFVTA.

The protein belongs to the PetG family. The 4 large subunits of the cytochrome b6-f complex are cytochrome b6, subunit IV (17 kDa polypeptide, PetD), cytochrome f and the Rieske protein, while the 4 small subunits are PetG, PetL, PetM and PetN. The complex functions as a dimer.

It is found in the plastid membrane. Functionally, component of the cytochrome b6-f complex, which mediates electron transfer between photosystem II (PSII) and photosystem I (PSI), cyclic electron flow around PSI, and state transitions. PetG is required for either the stability or assembly of the cytochrome b6-f complex. The polypeptide is Cytochrome b6-f complex subunit 5 (Cuscuta obtusiflora (Peruvian dodder)).